A 284-amino-acid chain; its full sequence is Small ribosomal subunit protein uS5z (284 aa).

Basic and acidic residues predominate over residues 1–19; that stretch reads MAERGGEGGAERGGDRGDF. Positions 1 to 51 are disordered; that stretch reads MAERGGEGGAERGGDRGDFGRGFGGGRGGGRGRDRGPRGRGRRGGRASEET. Over residues 20–29 the composition is skewed to gly residues; the sequence is GRGFGGGRGG. The region spanning 95–158 is the S5 DRBM domain; the sequence is LKDEVMKIMP…ILAKLSVVPV (64 aa).

It belongs to the universal ribosomal protein uS5 family.

In Arabidopsis thaliana (Mouse-ear cress), this protein is Small ribosomal subunit protein uS5z (RPS2A).